The chain runs to 457 residues: ATP synthase subunit beta (457 aa).

147–154 is a binding site for ATP; sequence GGAGVGKT.

Belongs to the ATPase alpha/beta chains family. In terms of assembly, F-type ATPases have 2 components, CF(1) - the catalytic core - and CF(0) - the membrane proton channel. CF(1) has five subunits: alpha(3), beta(3), gamma(1), delta(1), epsilon(1). CF(0) has three main subunits: a(1), b(2) and c(9-12). The alpha and beta chains form an alternating ring which encloses part of the gamma chain. CF(1) is attached to CF(0) by a central stalk formed by the gamma and epsilon chains, while a peripheral stalk is formed by the delta and b chains.

Its subcellular location is the cell inner membrane. The enzyme catalyses ATP + H2O + 4 H(+)(in) = ADP + phosphate + 5 H(+)(out). In terms of biological role, produces ATP from ADP in the presence of a proton gradient across the membrane. The catalytic sites are hosted primarily by the beta subunits. This Haemophilus influenzae (strain PittEE) protein is ATP synthase subunit beta.